A 251-amino-acid chain; its full sequence is Flap endonuclease Xni (251 aa).

Aspartate 104 is a binding site for Mg(2+). The 90-residue stretch at 160–249 (VLPRQLPDYW…IDGNLQQLRL (90 aa)) folds into the 5'-3' exonuclease domain. The K(+) site is built by leucine 171, alanine 172, proline 180, valine 182, and isoleucine 185. An interaction with DNA region spans residues 184–189 (GIGPKS).

The protein belongs to the Xni family. Mg(2+) is required as a cofactor. It depends on K(+) as a cofactor.

In terms of biological role, has flap endonuclease activity. During DNA replication, flap endonucleases cleave the 5'-overhanging flap structure that is generated by displacement synthesis when DNA polymerase encounters the 5'-end of a downstream Okazaki fragment. This Salmonella schwarzengrund (strain CVM19633) protein is Flap endonuclease Xni.